Consider the following 253-residue polypeptide: Imidazole glycerol phosphate synthase subunit HisF (253 aa).

Residues Asp-11 and Asp-130 contribute to the active site.

It belongs to the HisA/HisF family. Heterodimer of HisH and HisF.

It localises to the cytoplasm. It carries out the reaction 5-[(5-phospho-1-deoxy-D-ribulos-1-ylimino)methylamino]-1-(5-phospho-beta-D-ribosyl)imidazole-4-carboxamide + L-glutamine = D-erythro-1-(imidazol-4-yl)glycerol 3-phosphate + 5-amino-1-(5-phospho-beta-D-ribosyl)imidazole-4-carboxamide + L-glutamate + H(+). It functions in the pathway amino-acid biosynthesis; L-histidine biosynthesis; L-histidine from 5-phospho-alpha-D-ribose 1-diphosphate: step 5/9. Functionally, IGPS catalyzes the conversion of PRFAR and glutamine to IGP, AICAR and glutamate. The HisF subunit catalyzes the cyclization activity that produces IGP and AICAR from PRFAR using the ammonia provided by the HisH subunit. In Ruegeria sp. (strain TM1040) (Silicibacter sp.), this protein is Imidazole glycerol phosphate synthase subunit HisF.